The chain runs to 459 residues: tRNA modification GTPase MnmE (459 aa).

(6S)-5-formyl-5,6,7,8-tetrahydrofolate is bound by residues R22, E85, and R124. A TrmE-type G domain is found at 221 to 380 (GLSTVIVGKP…LEIQIRDLFF (160 aa)). Residue N231 participates in K(+) binding. Residues 231–236 (NVGKSS), 250–256 (TEVAGTT), and 275–278 (DTAG) contribute to the GTP site. Mg(2+) is bound at residue S235. K(+)-binding residues include T250, V252, and T255. T256 lines the Mg(2+) pocket. K459 provides a ligand contact to (6S)-5-formyl-5,6,7,8-tetrahydrofolate.

The protein belongs to the TRAFAC class TrmE-Era-EngA-EngB-Septin-like GTPase superfamily. TrmE GTPase family. Homodimer. Heterotetramer of two MnmE and two MnmG subunits. Requires K(+) as cofactor.

It is found in the cytoplasm. In terms of biological role, exhibits a very high intrinsic GTPase hydrolysis rate. Involved in the addition of a carboxymethylaminomethyl (cmnm) group at the wobble position (U34) of certain tRNAs, forming tRNA-cmnm(5)s(2)U34. The polypeptide is tRNA modification GTPase MnmE (Staphylococcus aureus (strain USA300 / TCH1516)).